The primary structure comprises 354 residues: Uroporphyrinogen decarboxylase (354 aa).

Residues 27–31 (RQAGR), D77, Y154, T209, and H327 each bind substrate.

Belongs to the uroporphyrinogen decarboxylase family. As to quaternary structure, homodimer.

The protein localises to the cytoplasm. It carries out the reaction uroporphyrinogen III + 4 H(+) = coproporphyrinogen III + 4 CO2. It functions in the pathway porphyrin-containing compound metabolism; protoporphyrin-IX biosynthesis; coproporphyrinogen-III from 5-aminolevulinate: step 4/4. Its function is as follows. Catalyzes the decarboxylation of four acetate groups of uroporphyrinogen-III to yield coproporphyrinogen-III. The sequence is that of Uroporphyrinogen decarboxylase from Actinobacillus succinogenes (strain ATCC 55618 / DSM 22257 / CCUG 43843 / 130Z).